The sequence spans 413 residues: Cyclic AMP-dependent transcription factor ATF-7 (413 aa).

Positions 1–285 (MGDDRPFVCS…GMVVGTASTM (285 aa)) are transactivation domain. The C2H2-type zinc finger occupies 7-31 (FVCSAPGCGQRFTNEDHLAVHKHKH). Thr-51 is subject to Phosphothreonine; by MAPK11. Phosphothreonine occurs at positions 53 and 101. Disordered regions lie at residues 81 to 140 (ASDD…TTKP) and 299 to 337 (HPDAPSPAQPQVSPAQPTPSTGGRRRRTVDEDPDERRQR). A Glycyl lysine isopeptide (Lys-Gly) (interchain with G-Cter in SUMO1) cross-link involves residue Lys-107. 2 stretches are compositionally biased toward low complexity: residues 114–126 (VDSSPPDSPASSP) and 307–320 (QPQVSPAQPTPSTG). Over residues 326–337 (TVDEDPDERRQR) the composition is skewed to basic and acidic residues. The bZIP domain occupies 332 to 395 (DERRQRFLER…AQLKQLLLAH (64 aa)). The interval 334 to 354 (RRQRFLERNRAAASRCRQKRK) is basic motif. Residues 360–388 (LEKKAEELTSQNIQLSNEVTLLRNEVAQL) form a leucine-zipper region.

Belongs to the bZIP family. As to quaternary structure, homodimer; binds DNA as homodimer. Heterodimer; heterodimerizes with other members of ATF family and with JUN family members. Interacts with JNK2; the interaction does not phosphorylate ATF7 but acts as a docking site for other ATF-associated partners such as JUN family members. Interacts (via its transactivation domain) with TAF12 the interaction potentiates the transactivation activity and is inhibited by ATF7 sumoylation. Interacts with TAF4; the interaction inhibits the TAF12-dependent transactivation. Interacts with MAPK9; the interaction does not phosphorylate ATF7 but acts as a docking site for ATF7-associated partners such as JUN. Interacts with Ku complex components XRCC6 and XRCC7. Interacts with TERT. Post-translationally, on EGF stimulation, phosphorylated first on Thr-53 allowing subsequent phosphorylation on Thr-51. This latter phosphorylation prevents sumoylation, increases binding to TAF12 and enhances transcriptional activity. Social isolation stress as well as TNF-alpha also induce the phosphorylation of ATF7. Phosphorylated in proliferating colonic and small intestinal epithelial cells. In terms of processing, sumoylation delays nuclear localization and inhibits transactivation activity through preventing binding to TAF12. RANBP2 appears to be the specific E3 ligase.

The protein resides in the nucleus. The protein localises to the nucleoplasm. Its subcellular location is the chromosome. It is found in the telomere. Stress-responsive chromatin regulator that plays a role in various biological processes including innate immunological memory, adipocyte differentiation or telomerase regulation. In absence of stress, contributes to the formation of heterochromatin and heterochromatin-like structure by recruiting histone H3K9 tri- and di-methyltransferases thus silencing the transcription of target genes such as Htr5b, STAT1 in adipocytes, or genes involved in innate immunity in macrophages and adipocytes. Phosphorylation of ATF7 disrupts interactions with histone methyltransferase and enhances the association with coactivators containing histone acetyltransferase and/or histone demethylase, leading to disruption of the heterochromatin-like structure and subsequently transcriptional activation. In response to TNF-alpha, which is induced by various stresses, phosphorylated ATF7 and telomerase are released from telomeres leading to telomere shortening. Also plays a role in maintaining epithelial regenerative capacity and protecting against cell death during intestinal epithelial damage and repair. The sequence is that of Cyclic AMP-dependent transcription factor ATF-7 (Atf7) from Mus musculus (Mouse).